We begin with the raw amino-acid sequence, 295 residues long: Ribosomal RNA small subunit methyltransferase H (295 aa).

S-adenosyl-L-methionine is bound by residues 32 to 34, Asp-50, Phe-77, Asp-98, and Gln-105; that span reads GGY. Residues 275-295 are disordered; sequence KEISENTRSRSAKLRGIVKEE.

This sequence belongs to the methyltransferase superfamily. RsmH family.

The protein localises to the cytoplasm. The enzyme catalyses cytidine(1402) in 16S rRNA + S-adenosyl-L-methionine = N(4)-methylcytidine(1402) in 16S rRNA + S-adenosyl-L-homocysteine + H(+). In terms of biological role, specifically methylates the N4 position of cytidine in position 1402 (C1402) of 16S rRNA. The chain is Ribosomal RNA small subunit methyltransferase H from Anaplasma phagocytophilum (strain HZ).